Here is a 150-residue protein sequence, read N- to C-terminus: UPF0756 membrane protein NT05HA_0561 (150 aa).

4 helical membrane-spanning segments follow: residues 1-21 (MSLQ…LGIF), 52-72 (YGLS…LVSG), 81-101 (AFVS…AWLA), and 128-148 (FLGG…VLIG).

It belongs to the UPF0756 family.

The protein localises to the cell membrane. This Aggregatibacter aphrophilus (strain NJ8700) (Haemophilus aphrophilus) protein is UPF0756 membrane protein NT05HA_0561.